The sequence spans 146 residues: Peptide methionine sulfoxide reductase MsrB (146 aa).

One can recognise a MsrB domain in the interval 2 to 125 (LKKNKDELND…NSAAVQFIPY (124 aa)). Catalysis depends on Cys-114, which acts as the Nucleophile.

The protein belongs to the MsrB Met sulfoxide reductase family.

The enzyme catalyses L-methionyl-[protein] + [thioredoxin]-disulfide + H2O = L-methionyl-(R)-S-oxide-[protein] + [thioredoxin]-dithiol. The protein is Peptide methionine sulfoxide reductase MsrB of Staphylococcus carnosus (strain TM300).